A 308-amino-acid polypeptide reads, in one-letter code: UDP-N-acetylenolpyruvoylglucosamine reductase (308 aa).

The FAD-binding PCMH-type domain maps to 35–200 (RVGGPAQVLF…TSARFRGEPM (166 aa)). The active site involves R180. Basic and acidic residues predominate over residues 211–226 (EVQRHRETAQPVREKT). The disordered stretch occupies residues 211-236 (EVQRHRETAQPVREKTGGSTFKNPPG). Catalysis depends on S229, which acts as the Proton donor. Residue E299 is part of the active site.

It belongs to the MurB family. The cofactor is FAD.

It is found in the cytoplasm. It carries out the reaction UDP-N-acetyl-alpha-D-muramate + NADP(+) = UDP-N-acetyl-3-O-(1-carboxyvinyl)-alpha-D-glucosamine + NADPH + H(+). It participates in cell wall biogenesis; peptidoglycan biosynthesis. Functionally, cell wall formation. The protein is UDP-N-acetylenolpyruvoylglucosamine reductase of Rhodopseudomonas palustris (strain BisB18).